An 86-amino-acid polypeptide reads, in one-letter code: Co-chaperonin GroES (86 aa).

This sequence belongs to the GroES chaperonin family. As to quaternary structure, heptamer of 7 subunits arranged in a ring. Interacts with the chaperonin GroEL.

It is found in the cytoplasm. Its function is as follows. Together with the chaperonin GroEL, plays an essential role in assisting protein folding. The GroEL-GroES system forms a nano-cage that allows encapsulation of the non-native substrate proteins and provides a physical environment optimized to promote and accelerate protein folding. GroES binds to the apical surface of the GroEL ring, thereby capping the opening of the GroEL channel. The sequence is that of Co-chaperonin GroES from Campylobacter concisus (strain 13826).